The chain runs to 245 residues: tRNA1(Val) (adenine(37)-N6)-methyltransferase (245 aa).

It belongs to the methyltransferase superfamily. tRNA (adenine-N(6)-)-methyltransferase family.

The protein resides in the cytoplasm. The enzyme catalyses adenosine(37) in tRNA1(Val) + S-adenosyl-L-methionine = N(6)-methyladenosine(37) in tRNA1(Val) + S-adenosyl-L-homocysteine + H(+). Specifically methylates the adenine in position 37 of tRNA(1)(Val) (anticodon cmo5UAC). The polypeptide is tRNA1(Val) (adenine(37)-N6)-methyltransferase (Salmonella paratyphi A (strain ATCC 9150 / SARB42)).